A 132-amino-acid chain; its full sequence is Protein LEKR1 (132 aa).

Positions 37–116 form a coiled coil; sequence FKAMEEKVKA…KKQLSHLQDE (80 aa).

In Homo sapiens (Human), this protein is Protein LEKR1 (LEKR1).